The sequence spans 148 residues: Glyoxalase domain-containing protein 5 (148 aa).

The VOC domain maps to 25 to 145 (RLDHIVMTVK…DRNLLEVSSY (121 aa)).

The protein belongs to the glyoxalase I family.

The sequence is that of Glyoxalase domain-containing protein 5 (Glod5) from Mus musculus (Mouse).